Here is a 212-residue protein sequence, read N- to C-terminus: Thymidylate kinase (212 aa).

Position 10-17 (10-17 (GLEGAGKT)) interacts with ATP.

Belongs to the thymidylate kinase family.

It catalyses the reaction dTMP + ATP = dTDP + ADP. Phosphorylation of dTMP to form dTDP in both de novo and salvage pathways of dTTP synthesis. The protein is Thymidylate kinase of Yersinia enterocolitica serotype O:8 / biotype 1B (strain NCTC 13174 / 8081).